The primary structure comprises 166 residues: Phosphopantetheine adenylyltransferase (166 aa).

Ser9 is a substrate binding site. ATP is bound by residues 9 to 10 and His17; that span reads SF. Positions 41, 74, and 88 each coordinate substrate. Residues 89–91, Glu99, and 124–130 contribute to the ATP site; these read GLR and DSFISSS.

The protein belongs to the bacterial CoaD family. In terms of assembly, homohexamer. Requires Mg(2+) as cofactor.

It is found in the cytoplasm. It catalyses the reaction (R)-4'-phosphopantetheine + ATP + H(+) = 3'-dephospho-CoA + diphosphate. Its pathway is cofactor biosynthesis; coenzyme A biosynthesis; CoA from (R)-pantothenate: step 4/5. Functionally, reversibly transfers an adenylyl group from ATP to 4'-phosphopantetheine, yielding dephospho-CoA (dPCoA) and pyrophosphate. The protein is Phosphopantetheine adenylyltransferase of Lactobacillus johnsonii (strain CNCM I-12250 / La1 / NCC 533).